A 267-amino-acid polypeptide reads, in one-letter code: tRNA pseudouridine synthase A (267 aa).

Asp-53 serves as the catalytic Nucleophile. Tyr-111 is a binding site for substrate.

This sequence belongs to the tRNA pseudouridine synthase TruA family. Homodimer.

The catalysed reaction is uridine(38/39/40) in tRNA = pseudouridine(38/39/40) in tRNA. Formation of pseudouridine at positions 38, 39 and 40 in the anticodon stem and loop of transfer RNAs. This Alcanivorax borkumensis (strain ATCC 700651 / DSM 11573 / NCIMB 13689 / SK2) protein is tRNA pseudouridine synthase A.